A 364-amino-acid polypeptide reads, in one-letter code: sn-glycerol-3-phosphate import ATP-binding protein UgpC (364 aa).

Positions 4-235 (VVLRNVRKTY…PATTFVASFI (232 aa)) constitute an ABC transporter domain. 37–44 (GPSGCGKS) lines the ATP pocket.

The protein belongs to the ABC transporter superfamily. sn-glycerol-3-phosphate importer (TC 3.A.1.1.3) family. In terms of assembly, the complex is composed of two ATP-binding proteins (UgpC), two transmembrane proteins (UgpA and UgpE) and a solute-binding protein (UgpB).

It localises to the cell inner membrane. It catalyses the reaction sn-glycerol 3-phosphate(out) + ATP + H2O = sn-glycerol 3-phosphate(in) + ADP + phosphate + H(+). Part of the ABC transporter complex UgpBAEC involved in sn-glycerol-3-phosphate (G3P) import. Responsible for energy coupling to the transport system. The polypeptide is sn-glycerol-3-phosphate import ATP-binding protein UgpC (Rhodopseudomonas palustris (strain HaA2)).